Here is a 97-residue protein sequence, read N- to C-terminus: Secreted LysM effector Mg1LysM (97 aa).

An N-terminal signal peptide occupies residues 1-18 (MQFTALVAALLSVAAVQA). A LysM domain is found at 37-84 (QQYVARSGDTLTKIAQEIYHDVVGVCDIARANNLADPNRIDAGTPYTI). 4 residues coordinate chitin: G44, T48, N74, and I76.

The protein belongs to the secreted LysM effector family. Forms homodimers in a chitin-independent manner through interactions at the N-termini of Mg1LysM monomers. Homodimers are further polymerized in a chitin-dependent manner.

The protein resides in the secreted. The protein localises to the cell wall. Secreted effector that enables the plant pathogenic fungus to manipulate host defenses for successful infection. Binds chitin but not cellulose or xylan. Chitin-induced polymerization of homodimers forms a contiguous Mg1LysM highly oligomeric super-complexe that is anchored to the chitin in the fungal cell wall to prevent hydrolysis by host chitinases. The polypeptide is Secreted LysM effector Mg1LysM (Zymoseptoria tritici (strain ST99CH_3D7)).